A 349-amino-acid polypeptide reads, in one-letter code: tRNA pseudouridine synthase D (349 aa).

Phenylalanine 27 is a substrate binding site. Aspartate 80 functions as the Nucleophile in the catalytic mechanism. Residue asparagine 129 coordinates substrate. One can recognise a TRUD domain in the interval 155-303 (GVPNYFGAQR…VEAARRAMLL (149 aa)). Phenylalanine 329 lines the substrate pocket.

Belongs to the pseudouridine synthase TruD family.

It catalyses the reaction uridine(13) in tRNA = pseudouridine(13) in tRNA. Functionally, responsible for synthesis of pseudouridine from uracil-13 in transfer RNAs. In Escherichia coli O17:K52:H18 (strain UMN026 / ExPEC), this protein is tRNA pseudouridine synthase D.